The chain runs to 448 residues: Putative flavin-containing monooxygenase FMO GS-OX-like 10 (448 aa).

Residue 18 to 23 participates in FAD binding; sequence GAGAAG. NADP(+) is bound at residue 212-217; that stretch reads GSSVSG.

This sequence belongs to the FMO family. It depends on FAD as a cofactor.

Functionally, catalyzes the conversion of methylthioalkyl glucosinolates of any chain length into methylsulfinylalkyl glucosinolates. This is Putative flavin-containing monooxygenase FMO GS-OX-like 10 from Arabidopsis thaliana (Mouse-ear cress).